The sequence spans 589 residues: UvrABC system protein C (589 aa).

The GIY-YIG domain occupies 13–90 (PNPGCYLFKN…IKTHTPKYNF (78 aa)). Positions 194 to 229 (KDILKKLHHLMQKASEKMFYEKAQEYRDIIDSIKQT) constitute a UVR domain.

This sequence belongs to the UvrC family. Interacts with UvrB in an incision complex.

It localises to the cytoplasm. In terms of biological role, the UvrABC repair system catalyzes the recognition and processing of DNA lesions. UvrC both incises the 5' and 3' sides of the lesion. The N-terminal half is responsible for the 3' incision and the C-terminal half is responsible for the 5' incision. This is UvrABC system protein C from Aster yellows witches'-broom phytoplasma (strain AYWB).